Consider the following 517-residue polypeptide: 2-isopropylmalate synthase (517 aa).

Residues 4-266 enclose the Pyruvate carboxyltransferase domain; that stretch reads INFFDTTLRD…ESTIQLNEIK (263 aa). Aspartate 13, histidine 201, histidine 203, and asparagine 237 together coordinate Mn(2+). Residues 391–517 are regulatory domain; it reads EFESLQVHYG…IEIEKHHAIS (127 aa).

The protein belongs to the alpha-IPM synthase/homocitrate synthase family. LeuA type 1 subfamily. As to quaternary structure, homodimer. The cofactor is Mn(2+).

The protein resides in the cytoplasm. The catalysed reaction is 3-methyl-2-oxobutanoate + acetyl-CoA + H2O = (2S)-2-isopropylmalate + CoA + H(+). It functions in the pathway amino-acid biosynthesis; L-leucine biosynthesis; L-leucine from 3-methyl-2-oxobutanoate: step 1/4. Catalyzes the condensation of the acetyl group of acetyl-CoA with 3-methyl-2-oxobutanoate (2-ketoisovalerate) to form 3-carboxy-3-hydroxy-4-methylpentanoate (2-isopropylmalate). The protein is 2-isopropylmalate synthase of Bacillus pumilus (strain SAFR-032).